A 233-amino-acid chain; its full sequence is Phosphatidylserine decarboxylase proenzyme (233 aa).

S188 acts as the Schiff-base intermediate with substrate; via pyruvic acid in catalysis. The residue at position 188 (S188) is a Pyruvic acid (Ser); by autocatalysis.

It belongs to the phosphatidylserine decarboxylase family. PSD-A subfamily. As to quaternary structure, heterodimer of a large membrane-associated beta subunit and a small pyruvoyl-containing alpha subunit. Pyruvate is required as a cofactor. Is synthesized initially as an inactive proenzyme. Formation of the active enzyme involves a self-maturation process in which the active site pyruvoyl group is generated from an internal serine residue via an autocatalytic post-translational modification. Two non-identical subunits are generated from the proenzyme in this reaction, and the pyruvate is formed at the N-terminus of the alpha chain, which is derived from the carboxyl end of the proenzyme. The post-translation cleavage follows an unusual pathway, termed non-hydrolytic serinolysis, in which the side chain hydroxyl group of the serine supplies its oxygen atom to form the C-terminus of the beta chain, while the remainder of the serine residue undergoes an oxidative deamination to produce ammonia and the pyruvoyl prosthetic group on the alpha chain.

It localises to the cell membrane. The catalysed reaction is a 1,2-diacyl-sn-glycero-3-phospho-L-serine + H(+) = a 1,2-diacyl-sn-glycero-3-phosphoethanolamine + CO2. The protein operates within phospholipid metabolism; phosphatidylethanolamine biosynthesis; phosphatidylethanolamine from CDP-diacylglycerol: step 2/2. In terms of biological role, catalyzes the formation of phosphatidylethanolamine (PtdEtn) from phosphatidylserine (PtdSer). The sequence is that of Phosphatidylserine decarboxylase proenzyme from Ruegeria sp. (strain TM1040) (Silicibacter sp.).